Reading from the N-terminus, the 174-residue chain is RNA pyrophosphohydrolase (174 aa).

The region spanning 6 to 149 is the Nudix hydrolase domain; sequence GFRANVGIII…KRDVYRKVMK (144 aa). Positions 38-59 match the Nudix box motif; it reads GGVDDGESAEEAMYRELYEEVG.

This sequence belongs to the Nudix hydrolase family. RppH subfamily. The cofactor is a divalent metal cation.

Functionally, accelerates the degradation of transcripts by removing pyrophosphate from the 5'-end of triphosphorylated RNA, leading to a more labile monophosphorylated state that can stimulate subsequent ribonuclease cleavage. In Shewanella oneidensis (strain ATCC 700550 / JCM 31522 / CIP 106686 / LMG 19005 / NCIMB 14063 / MR-1), this protein is RNA pyrophosphohydrolase.